The chain runs to 439 residues: Glucose-1-phosphate adenylyltransferase (439 aa).

Alpha-D-glucose 1-phosphate contacts are provided by residues glycine 172, 187 to 188, and serine 219; that span reads EK.

This sequence belongs to the bacterial/plant glucose-1-phosphate adenylyltransferase family. Homotetramer.

The enzyme catalyses alpha-D-glucose 1-phosphate + ATP + H(+) = ADP-alpha-D-glucose + diphosphate. It participates in glycan biosynthesis; glycogen biosynthesis. Its function is as follows. Involved in the biosynthesis of ADP-glucose, a building block required for the elongation reactions to produce glycogen. Catalyzes the reaction between ATP and alpha-D-glucose 1-phosphate (G1P) to produce pyrophosphate and ADP-Glc. The chain is Glucose-1-phosphate adenylyltransferase from Synechocystis sp. (strain ATCC 27184 / PCC 6803 / Kazusa).